Here is a 232-residue protein sequence, read N- to C-terminus: 5'-methylthioadenosine/S-adenosylhomocysteine nucleosidase (232 aa).

The active-site Proton acceptor is the E12. Substrate-binding positions include G78, I152, and 173–174 (ME). D197 acts as the Proton donor in catalysis.

This sequence belongs to the PNP/UDP phosphorylase family. MtnN subfamily. As to quaternary structure, homodimer.

The catalysed reaction is S-adenosyl-L-homocysteine + H2O = S-(5-deoxy-D-ribos-5-yl)-L-homocysteine + adenine. It carries out the reaction S-methyl-5'-thioadenosine + H2O = 5-(methylsulfanyl)-D-ribose + adenine. It catalyses the reaction 5'-deoxyadenosine + H2O = 5-deoxy-D-ribose + adenine. It participates in amino-acid biosynthesis; L-methionine biosynthesis via salvage pathway; S-methyl-5-thio-alpha-D-ribose 1-phosphate from S-methyl-5'-thioadenosine (hydrolase route): step 1/2. Functionally, catalyzes the irreversible cleavage of the glycosidic bond in both 5'-methylthioadenosine (MTA) and S-adenosylhomocysteine (SAH/AdoHcy) to adenine and the corresponding thioribose, 5'-methylthioribose and S-ribosylhomocysteine, respectively. Also cleaves 5'-deoxyadenosine, a toxic by-product of radical S-adenosylmethionine (SAM) enzymes, into 5-deoxyribose and adenine. Thus, is required for in vivo function of the radical SAM enzymes biotin synthase and lipoic acid synthase, that are inhibited by 5'-deoxyadenosine accumulation. In Salmonella dublin (strain CT_02021853), this protein is 5'-methylthioadenosine/S-adenosylhomocysteine nucleosidase.